A 69-amino-acid chain; its full sequence is Amphipathic peptide StCT2 (69 aa).

The N-terminal stretch at 1–23 is a signal peptide; the sequence is MKTQFAVLIISMILMQMLVQTEA. At Ile37 the chain carries Isoleucine amide. A propeptide spanning residues 41–69 is cleaved from the precursor; that stretch reads SLRNQDQFDNMFDSDLSDADLKLLDDLFD.

This sequence belongs to the non-disulfide-bridged peptide (NDBP) superfamily. Short antimicrobial peptide (group 4) family. Expressed by the venom gland.

It is found in the secreted. The protein localises to the target cell membrane. In terms of biological role, antimicrobial peptide that is rapidly bactericidal against Gram-positive bacteria. The protein is Amphipathic peptide StCT2 of Scorpiops tibetanus (Scorpion).